Here is a 140-residue protein sequence, read N- to C-terminus: Small ribosomal subunit protein uS19 (140 aa).

This sequence belongs to the universal ribosomal protein uS19 family.

Its function is as follows. Protein S19 forms a complex with S13 that binds strongly to the 16S ribosomal RNA. The polypeptide is Small ribosomal subunit protein uS19 (Natronomonas pharaonis (strain ATCC 35678 / DSM 2160 / CIP 103997 / JCM 8858 / NBRC 14720 / NCIMB 2260 / Gabara) (Halobacterium pharaonis)).